We begin with the raw amino-acid sequence, 182 residues long: ATP-dependent protease subunit HslV (182 aa).

The active site involves threonine 12. Residues glycine 167, cysteine 170, and threonine 173 each contribute to the Na(+) site.

The protein belongs to the peptidase T1B family. HslV subfamily. As to quaternary structure, a double ring-shaped homohexamer of HslV is capped on each side by a ring-shaped HslU homohexamer. The assembly of the HslU/HslV complex is dependent on binding of ATP.

Its subcellular location is the cytoplasm. It catalyses the reaction ATP-dependent cleavage of peptide bonds with broad specificity.. Allosterically activated by HslU binding. In terms of biological role, protease subunit of a proteasome-like degradation complex believed to be a general protein degrading machinery. The chain is ATP-dependent protease subunit HslV from Acidiphilium cryptum (strain JF-5).